The following is a 374-amino-acid chain: Chaperone protein DnaJ (374 aa).

Positions 6–70 (DYYDILGVSK…QKRAQYDQFG (65 aa)) constitute a J domain. The CR-type zinc-finger motif lies at 135–217 (GKKTTIKYSR…CGGTGHTSQQ (83 aa)). Zn(2+) is bound by residues cysteine 148, cysteine 151, cysteine 165, cysteine 168, cysteine 191, cysteine 194, cysteine 205, and cysteine 208. 4 CXXCXGXG motif repeats span residues 148–155 (CKTCGGSG), 165–172 (CHKCNGTG), 191–198 (CDVCNGTG), and 205–212 (CPTCGGTG). Disordered stretches follow at residues 308–328 (GTNF…GTGD) and 347–374 (EALK…KFMN).

This sequence belongs to the DnaJ family. In terms of assembly, homodimer. Zn(2+) is required as a cofactor.

It is found in the cytoplasm. Participates actively in the response to hyperosmotic and heat shock by preventing the aggregation of stress-denatured proteins and by disaggregating proteins, also in an autonomous, DnaK-independent fashion. Unfolded proteins bind initially to DnaJ; upon interaction with the DnaJ-bound protein, DnaK hydrolyzes its bound ATP, resulting in the formation of a stable complex. GrpE releases ADP from DnaK; ATP binding to DnaK triggers the release of the substrate protein, thus completing the reaction cycle. Several rounds of ATP-dependent interactions between DnaJ, DnaK and GrpE are required for fully efficient folding. Also involved, together with DnaK and GrpE, in the DNA replication of plasmids through activation of initiation proteins. This chain is Chaperone protein DnaJ, found in Pediococcus pentosaceus (strain ATCC 25745 / CCUG 21536 / LMG 10740 / 183-1w).